Consider the following 1187-residue polypeptide: MRAVPTWIDKVHDRDKVEQCIYDLAFRPDGSQLIVAAGNRVLVYDTADGTLIQPLKGHKDTVYCVAYAKDGKRFASGSADKSIIIWTSKLEGILKYTHNDSIQCVSYNPVTHQLASCSSGDFGLWSPEQKSVSKHKVSSKITCCGWTNDGQYLALGMMNGVVSIRNKNGEEKVKIERPGGSSSPVWSIAWNPSKDEHNDILAVADWGQKLSFYQLSGKQIGKDRSLTFDPCCVSFFSKGEYMVLCGSDRQAALYTRDGVRLGSIAEQNAWVWTCRVKPDSNYVVVGCQDGTIAFFQLIFSTVHGLYKDRYAYRDSMTDVIVQHLITEQKVRIKCRELVKKIAIYRSRLAIQLPEKILIYELLSDDSADMHYRVKEKICRRFECNLLVVCSQHIILCQEKRLQCLSFTALRQREWLMESLIRYIKVIGGPAGREGLLVGLKNGAILKIFVDNPFPITLLKQNTSVRCLDMSSNRSRLAVVDEHNTCLVYDIHTRELLFQEPNANSVAWNTQCEDMLCFSGGGFLNIKACSFPVHQQKLQGFVVGYNGSRIFCLHVYSMAAVEVPQSAPMYQYLERRMFQQAYNIACLGVTDSDWRDLATEALEGLDFHTAKKAFIRIRDLRYLELISSIEERKKRGETDNQLFLADVFAYQGKFHEAAKLYRRSGQDGRALSMYTDLRMFDYAKDFLGSADPKDTKLLMKKQADWAKNSREPRAAAEMYLSAGEHLKAIQIIGEHGWVDMLIDVGRRLDKAERAALSRCAVFLQQLQQHGYAAELYSKMGDLRALLQLHVHATHWDEAFSLVEKHPQFRDDVYVPYAQWLAEHDRFEEAQRAFHKAGRQAEAVRVLEQLTHNAVVESRFSDASYYYWMLSMQCLDIAREDSEQKQEMLKKFHSFQHLAELYHVYHSVHRYMSEPFSSNMPEILFNISRFLFHNLSTHTPMGISKVDTLYALAKQSKLLGAYKVSRHAFEKLQSLKIPARYQDSVELSSLTVRSKPYRDNEDLIPMCYRCSTNNPLLNNQGNSCINCRQPFIFSASSYEVLPLVEFYLDQGISDEEAVSLIDLEVPRVEKNKSWQEMSSGESQCLKLEDGPDDPEDDPFTAKLSFEQGGSVFVPVRVSRAVLRSMSRRDVLIKRWPAPLSWQYYRSLLPDVSITMCPSCFQMFHSEDYELLVLQHSCCPFCRRPIDESC.

WD repeat units lie at residues 16-54 (KVEQCIYDLAFRPDGSQLIVAAGNRVLVYDTADGTLIQP), 57-97 (GHKD…LKYT), 99-135 (NDSIQCVSYNPVTHQLASCSSGDFGLWSPEQKSVSKH), 137-175 (VSSKITCCGWTNDGQYLALGMMNGVVSIRNKNGEEKVKI), 180-223 (GSSS…IGKD), 225-264 (SLTFDPCCVSFFSKGEYMVLCGSDRQAALYTRDGVRLGSI), 266-306 (EQNA…HGLY), and 459-498 (KQNTSVRCLDMSSNRSRLAVVDEHNTCLVYDIHTRELLFQ). A disordered region spans residues 1070-1094 (KSWQEMSSGESQCLKLEDGPDDPED).

As to quaternary structure, component of the IFT complex A (IFT-A) complex.

It is found in the cell projection. The protein resides in the cilium. The protein localises to the cytoplasm. It localises to the cytoskeleton. Its subcellular location is the cilium basal body. Functionally, required for cilia formation during embryonal development. Acts as a negative regulator of Shh signaling. This chain is Intraflagellar transport protein 122 homolog (ift122), found in Danio rerio (Zebrafish).